We begin with the raw amino-acid sequence, 131 residues long: Small ribosomal subunit protein uS8 (131 aa).

The protein belongs to the universal ribosomal protein uS8 family. As to quaternary structure, part of the 30S ribosomal subunit. Contacts proteins S5 and S12.

Its function is as follows. One of the primary rRNA binding proteins, it binds directly to 16S rRNA central domain where it helps coordinate assembly of the platform of the 30S subunit. The polypeptide is Small ribosomal subunit protein uS8 (Variovorax paradoxus (strain S110)).